Here is a 262-residue protein sequence, read N- to C-terminus: Thiazole synthase (262 aa).

Catalysis depends on Lys97, which acts as the Schiff-base intermediate with DXP. 1-deoxy-D-xylulose 5-phosphate contacts are provided by residues Gly158, 185–186 (AG), and 207–208 (NT). Positions 243 to 262 (DKAQASTPTVGQPFWHSAEY) are disordered.

It belongs to the ThiG family. Homotetramer. Forms heterodimers with either ThiH or ThiS.

The protein resides in the cytoplasm. It catalyses the reaction [ThiS sulfur-carrier protein]-C-terminal-Gly-aminoethanethioate + 2-iminoacetate + 1-deoxy-D-xylulose 5-phosphate = [ThiS sulfur-carrier protein]-C-terminal Gly-Gly + 2-[(2R,5Z)-2-carboxy-4-methylthiazol-5(2H)-ylidene]ethyl phosphate + 2 H2O + H(+). Its pathway is cofactor biosynthesis; thiamine diphosphate biosynthesis. Its function is as follows. Catalyzes the rearrangement of 1-deoxy-D-xylulose 5-phosphate (DXP) to produce the thiazole phosphate moiety of thiamine. Sulfur is provided by the thiocarboxylate moiety of the carrier protein ThiS. In vitro, sulfur can be provided by H(2)S. This chain is Thiazole synthase, found in Neisseria meningitidis serogroup C (strain 053442).